A 152-amino-acid polypeptide reads, in one-letter code: Ribonuclease H (152 aa).

The 142-residue stretch at 1 to 142 (MNSKVVIYTD…ADKLAVQGRE (142 aa)) folds into the RNase H type-1 domain. D10, E48, D70, and D134 together coordinate Mg(2+).

This sequence belongs to the RNase H family. In terms of assembly, monomer. The cofactor is Mg(2+).

It is found in the cytoplasm. It carries out the reaction Endonucleolytic cleavage to 5'-phosphomonoester.. In terms of biological role, endonuclease that specifically degrades the RNA of RNA-DNA hybrids. In Rickettsia akari (strain Hartford), this protein is Ribonuclease H.